Consider the following 513-residue polypeptide: Sphingosine-1-phosphate transporter SPNS2 (513 aa).

A run of 11 helical transmembrane segments spans residues 102 to 122, 130 to 150, 163 to 183, 190 to 210, 222 to 242, 276 to 296, 320 to 340, 354 to 374, 378 to 398, 422 to 442, and 463 to 483; these read GLLQ…FGYL, VILS…SFIP, LVGI…GDLF, LMLS…YITG, WALR…LIFV, LATS…PLYL, LIFG…GAGA, LVCA…FVAA, IIAA…NWAI, TSHL…SDLI, and LCPF…LFFL.

It belongs to the major facilitator superfamily. Spinster (TC 2.A.1.49) family.

It localises to the cell membrane. It is found in the endosome membrane. The enzyme catalyses sphing-4-enine 1-phosphate(in) = sphing-4-enine 1-phosphate(out). It catalyses the reaction sphinganine 1-phosphate(in) = sphinganine 1-phosphate(out). In terms of biological role, lipid transporter that specifically mediates export of sphingosine-1-phosphate (sphing-4-enine 1-phosphate, S1P) and sphinganine-1-phosphate. The sequence is that of Sphingosine-1-phosphate transporter SPNS2 (spns2) from Xenopus tropicalis (Western clawed frog).